Reading from the N-terminus, the 224-residue chain is uncharacterized protein (224 aa).

The protein to M.tuberculosis Rv2558.

This is an uncharacterized protein from Mycobacterium tuberculosis (strain CDC 1551 / Oshkosh).